The chain runs to 133 residues: S-adenosylmethionine decarboxylase proenzyme (133 aa).

The Schiff-base intermediate with substrate; via pyruvic acid role is filled by serine 63. The residue at position 63 (serine 63) is a Pyruvic acid (Ser); by autocatalysis. The active-site Proton acceptor; for processing activity is histidine 68. The active-site Proton donor; for catalytic activity is cysteine 83.

The protein belongs to the prokaryotic AdoMetDC family. Type 1 subfamily. As to quaternary structure, heterotetramer of two alpha and two beta chains arranged as a dimer of alpha/beta heterodimers. Requires pyruvate as cofactor. Is synthesized initially as an inactive proenzyme. Formation of the active enzyme involves a self-maturation process in which the active site pyruvoyl group is generated from an internal serine residue via an autocatalytic post-translational modification. Two non-identical subunits are generated from the proenzyme in this reaction, and the pyruvate is formed at the N-terminus of the alpha chain, which is derived from the carboxyl end of the proenzyme. The post-translation cleavage follows an unusual pathway, termed non-hydrolytic serinolysis, in which the side chain hydroxyl group of the serine supplies its oxygen atom to form the C-terminus of the beta chain, while the remainder of the serine residue undergoes an oxidative deamination to produce ammonia and the pyruvoyl group blocking the N-terminus of the alpha chain.

It carries out the reaction S-adenosyl-L-methionine + H(+) = S-adenosyl 3-(methylsulfanyl)propylamine + CO2. It functions in the pathway amine and polyamine biosynthesis; S-adenosylmethioninamine biosynthesis; S-adenosylmethioninamine from S-adenosyl-L-methionine: step 1/1. In terms of biological role, catalyzes the decarboxylation of S-adenosylmethionine to S-adenosylmethioninamine (dcAdoMet), the propylamine donor required for the synthesis of the polyamines spermine and spermidine from the diamine putrescine. The polypeptide is S-adenosylmethionine decarboxylase proenzyme (Acidithiobacillus ferrooxidans (strain ATCC 23270 / DSM 14882 / CIP 104768 / NCIMB 8455) (Ferrobacillus ferrooxidans (strain ATCC 23270))).